The following is a 161-amino-acid chain: MVKSCSVGWGAKVAAVFAALYTSILGLAVLIPHANSAIEVFSAVMAAGLGILIALLAVPFISEITDKTETLEVEVIGEVVVEDSLSFGGANAGLKSERIFVADKGLVIDGYLFEWQKIKFEIEKDEIILRLPSGRRLPIPYSEELAEMLRKSKTSYFIDTK.

Transmembrane regions (helical) follow at residues Val-13–Asn-35 and Val-40–Ser-62.

The protein localises to the cell membrane. This is an uncharacterized protein from Archaeoglobus fulgidus (strain ATCC 49558 / DSM 4304 / JCM 9628 / NBRC 100126 / VC-16).